Consider the following 456-residue polypeptide: Cysteine--tRNA ligase (456 aa).

C28 provides a ligand contact to Zn(2+). The short motif at 30-40 (MTVYDYCHLGH) is the 'HIGH' region element. The Zn(2+) site is built by C209, H234, and E238. A 'KMSKS' region motif is present at residues 266-270 (KMSKS). K269 is an ATP binding site.

The protein belongs to the class-I aminoacyl-tRNA synthetase family. Monomer. It depends on Zn(2+) as a cofactor.

The protein localises to the cytoplasm. It catalyses the reaction tRNA(Cys) + L-cysteine + ATP = L-cysteinyl-tRNA(Cys) + AMP + diphosphate. This chain is Cysteine--tRNA ligase, found in Dechloromonas aromatica (strain RCB).